The chain runs to 390 residues: Pepsin B (390 aa).

The N-terminal stretch at 1 to 16 is a signal peptide; the sequence is MKIQVLVLVCLHLSEG. A propeptide spans 17-59 (activation peptide); sequence VERIILKKGKSIRQVMEERGVLETFLRNHPKVDPAAKYLFNND. The region spanning 74 to 387 is the Peptidase A1 domain; sequence YFGEISIGTP…DMAANRVGFA (314 aa). Residue D92 is part of the active site. 2 cysteine pairs are disulfide-bonded: C105–C110 and C269–C273. Residue D278 is part of the active site. A disulfide bond links C312 and C345.

This sequence belongs to the peptidase A1 family.

The protein resides in the secreted. The enzyme catalyses Degradation of gelatin, little activity on hemoglobin. Specificity on B chain of insulin more restricted than that of pepsin A. Does not cleave 1-Phe-|-Val-2, 4-Gln-|-His-5 or 23-Gly-|-Phe-24.. Hydrolyzes various peptides including beta-endorphin, insulin B chain, dynorphin A, and neurokinin A, with high specificity for the cleavage of the Phe-Xaa bonds. In Canis lupus familiaris (Dog), this protein is Pepsin B (PGB).